The chain runs to 334 residues: Ornithine carbamoyltransferase (334 aa).

Carbamoyl phosphate-binding positions include 57 to 60 (STRT), Gln84, Arg108, and 135 to 138 (HPTQ). Residues Asn169, Asp233, and 237-238 (SM) each bind L-ornithine. Residues 275–276 (CL) and Arg320 each bind carbamoyl phosphate.

Belongs to the aspartate/ornithine carbamoyltransferase superfamily. OTCase family.

Its subcellular location is the cytoplasm. The catalysed reaction is carbamoyl phosphate + L-ornithine = L-citrulline + phosphate + H(+). It participates in amino-acid biosynthesis; L-arginine biosynthesis; L-arginine from L-ornithine and carbamoyl phosphate: step 1/3. In terms of biological role, reversibly catalyzes the transfer of the carbamoyl group from carbamoyl phosphate (CP) to the N(epsilon) atom of ornithine (ORN) to produce L-citrulline. The protein is Ornithine carbamoyltransferase of Vibrio vulnificus (strain YJ016).